The primary structure comprises 196 residues: Recombination protein RecR (196 aa).

The C4-type zinc finger occupies 57 to 72 (CERCHTFTQADICATC). The Toprim domain maps to 80-175 (SKLCVVETPA…RLTRLARGVP (96 aa)).

The protein belongs to the RecR family.

In terms of biological role, may play a role in DNA repair. It seems to be involved in an RecBC-independent recombinational process of DNA repair. It may act with RecF and RecO. In Albidiferax ferrireducens (strain ATCC BAA-621 / DSM 15236 / T118) (Rhodoferax ferrireducens), this protein is Recombination protein RecR.